The primary structure comprises 498 residues: GTPase Der (498 aa).

EngA-type G domains lie at 3–167 (PVVA…FDDL) and 210–383 (IKLA…KSAT). GTP is bound by residues 9-16 (GRPNVGKS), 57-61 (DTGGI), 119-122 (NKID), 216-223 (GRPNVGKS), 263-267 (DTAGV), and 328-331 (NKWD). Residues 384-468 (TRVGTSVLTR…PIRINFQNSD (85 aa)) form the KH-like domain.

The protein belongs to the TRAFAC class TrmE-Era-EngA-EngB-Septin-like GTPase superfamily. EngA (Der) GTPase family. As to quaternary structure, associates with the 50S ribosomal subunit.

In terms of biological role, GTPase that plays an essential role in the late steps of ribosome biogenesis. The polypeptide is GTPase Der (Vibrio campbellii (strain ATCC BAA-1116)).